The chain runs to 456 residues: Trigger factor (456 aa).

The PPIase FKBP-type domain occupies 166–245; that stretch reads GDYANIDLNA…VNSVKAEELP (80 aa).

It belongs to the FKBP-type PPIase family. Tig subfamily.

It is found in the cytoplasm. It catalyses the reaction [protein]-peptidylproline (omega=180) = [protein]-peptidylproline (omega=0). Involved in protein export. Acts as a chaperone by maintaining the newly synthesized protein in an open conformation. Functions as a peptidyl-prolyl cis-trans isomerase. In Bifidobacterium adolescentis (strain ATCC 15703 / DSM 20083 / NCTC 11814 / E194a), this protein is Trigger factor.